Reading from the N-terminus, the 550-residue chain is Chaperonin GroEL (550 aa).

Residues 30–33 (TLGP), lysine 51, 87–91 (DGTTT), glycine 415, and aspartate 496 contribute to the ATP site.

Belongs to the chaperonin (HSP60) family. As to quaternary structure, forms a cylinder of 14 subunits composed of two heptameric rings stacked back-to-back. Interacts with the co-chaperonin GroES.

Its subcellular location is the cytoplasm. It catalyses the reaction ATP + H2O + a folded polypeptide = ADP + phosphate + an unfolded polypeptide.. Together with its co-chaperonin GroES, plays an essential role in assisting protein folding. The GroEL-GroES system forms a nano-cage that allows encapsulation of the non-native substrate proteins and provides a physical environment optimized to promote and accelerate protein folding. The sequence is that of Chaperonin GroEL from Rickettsia typhi (strain ATCC VR-144 / Wilmington).